The primary structure comprises 78 residues: Acyl carrier protein (78 aa).

Positions 2–77 (SDIEQRVKQA…SAIDYVTKKL (76 aa)) constitute a Carrier domain. S37 is subject to O-(pantetheine 4'-phosphoryl)serine.

The protein belongs to the acyl carrier protein (ACP) family. In terms of processing, 4'-phosphopantetheine is transferred from CoA to a specific serine of apo-ACP by AcpS. This modification is essential for activity because fatty acids are bound in thioester linkage to the sulfhydryl of the prosthetic group.

The protein resides in the cytoplasm. It functions in the pathway lipid metabolism; fatty acid biosynthesis. In terms of biological role, carrier of the growing fatty acid chain in fatty acid biosynthesis. The sequence is that of Acyl carrier protein from Acinetobacter baumannii (strain AB307-0294).